The following is a 271-amino-acid chain: HTH-type transcriptional repressor AllR (271 aa).

Residues 21 to 83 (AQALERGIAI…SQLGWWHIGL (63 aa)) enclose the HTH iclR-type domain. The segment at residues 43 to 62 (VSDISLNLDLPLSTTFRLLK) is a DNA-binding region (H-T-H motif). One can recognise an IclR-ED domain in the interval 98–267 (VLSVAGPFMR…ARDISTALGL (170 aa)). Glyoxylate-binding positions include 154–156 (SGA), D207, C217, and 234–236 (SIS).

Negative regulator of allantoin and glyoxylate utilization operons. Binds to the gcl promoter and to the allS-allA intergenic region. This is HTH-type transcriptional repressor AllR (allR) from Escherichia coli (strain UTI89 / UPEC).